The sequence spans 1961 residues: Ankyrin-3 (1961 aa).

Over residues 1–10 (MSEEPKEKPA) the composition is skewed to basic and acidic residues. Residues 1–25 (MSEEPKEKPAKPAHRKRKGKKSDAN) are disordered. Residues 11 to 20 (KPAHRKRKGK) are compositionally biased toward basic residues. Position 22 is a phosphoserine (Ser22). ANK repeat units lie at residues 56-85 (NGLN…NVDA), 89-118 (KGNT…NVNA), 122-151 (NGFT…SQSL), 155-184 (DGFT…KGKV), 186-213 (LPAL…NADV), 217-246 (SGFT…AVDF), 250-279 (NDIT…KIDA), 283-312 (DGLT…PILS), 316-345 (NGLS…PVDD), 349-378 (DYLT…SPNA), 382-411 (NGFT…SIQA), 415-444 (SGLT…SPNT), 448-477 (RGET…QVEA), 481-510 (DDQT…SPNA), 514-543 (SGYT…SLSI), 547-576 (KGFT…SPDA), 580-609 (SGLT…SPHA), 613-642 (NGYT…DANA), 646-675 (QGIA…NVNL), 679-708 (SGLT…HVDA), 712-741 (MGYT…KVNA), 745-774 (NGYT…SPNE), and 778-807 (NGNT…EIMT). Ser606 bears the Phosphoserine mark. Residue Leu732 is modified to Phosphoserine. Phosphoserine occurs at positions 830, 844, 850, 873, 914, 917, 923, 958, 960, and 1114. ZU5 domains are found at residues 985–1140 (FLVS…VVSR) and 1142–1289 (KQES…LADC). The UPA domain stretch occupies residues 1274 to 1408 (VSFTTNVSAR…SIKIRDTSQE (135 aa)). Residues Ser1451, Ser1462, Ser1470, Ser1473, and Gly1560 each carry the phosphoserine modification. The Death domain occupies 1478 to 1562 (TDIRMAIVAD…DIVTLLEGPI (85 aa)). 5 disordered regions span residues 1606–1678 (PNPF…DPLD), 1698–1740 (SVPG…VTED), 1784–1818 (WQNE…DQAR), 1844–1884 (PEAK…PVSP), and 1915–1961 (MTRT…KKTH). The segment covering 1725-1740 (QQEKGKSGPDEEVTED) has biased composition (basic and acidic residues). The segment covering 1784–1795 (WQNETPSGSLES) has biased composition (polar residues). Phosphoserine occurs at positions 1795, 1813, and 1883. Residues 1808–1818 (DRLDDSSDQAR) are compositionally biased toward basic and acidic residues. Basic and acidic residues predominate over residues 1933 to 1961 (GSTRSEPKQGEGYKVKTKKEIRNVEKKTH).

As to quaternary structure, may be a constituent of a NFASC/NRCAM/ankyrin G complex. Interacts with RHBG. Directly interacts with DMD and betaDAG1; this interaction does not interfere with DMD-binding and is required for DMD and betaDAG1 retention at costameres. Interacts (via N-terminal ANK repeats) with SCHIP1 isoform 7 (via C-terminus); this interaction is required for the localization at axon initial segments (AISs) and nodes of Ranvier (NRs). Interacts with PLEC and FLNC. Interacts with KCNA1; this inhibits channel activity. Interacts with SCN5A. Interacts with PKP2 and GJA1/CX43. As to expression, expressed in many epithelial tissues, muscles and axons. Expressed in kidney, brain, skin, lung, liver, intestine, pancreas, heart and testis (at protein level). In testis, expressed in Leydig cells, but very weakly or not at all in Sertoli cells or seminiferous tubules. Expressed in macrophages (at protein level).

The protein localises to the cytoplasm. The protein resides in the cytoskeleton. It is found in the cell projection. Its subcellular location is the axon. It localises to the cell membrane. The protein localises to the sarcolemma. The protein resides in the postsynaptic cell membrane. It is found in the lysosome. Its subcellular location is the T-tubule. Its function is as follows. Membrane-cytoskeleton linker. May participate in the maintenance/targeting of ion channels and cell adhesion molecules at the nodes of Ranvier and axonal initial segments. In skeletal muscle, required for costamere localization of DMD and betaDAG1. Regulates KCNA1 channel activity in function of dietary Mg(2+) levels, and thereby contributes to the regulation of renal Mg(2+) reabsorption. Required for intracellular adhesion and junctional conductance in myocytes, potentially via stabilization of GJA1/CX43 protein abundance and promotion of PKP2, GJA1/CX43, and SCN5A/Nav1.5 localization to cell-cell junctions. This chain is Ankyrin-3 (Ank3), found in Mus musculus (Mouse).